The following is a 324-amino-acid chain: Glyoxylate/hydroxypyruvate reductase B (324 aa).

Catalysis depends on residues arginine 237 and glutamate 266. Catalysis depends on histidine 285, which acts as the Proton donor.

It belongs to the D-isomer specific 2-hydroxyacid dehydrogenase family. GhrB subfamily. In terms of assembly, homodimer.

It localises to the cytoplasm. The enzyme catalyses glycolate + NADP(+) = glyoxylate + NADPH + H(+). It catalyses the reaction (R)-glycerate + NAD(+) = 3-hydroxypyruvate + NADH + H(+). The catalysed reaction is (R)-glycerate + NADP(+) = 3-hydroxypyruvate + NADPH + H(+). Catalyzes the NADPH-dependent reduction of glyoxylate and hydroxypyruvate into glycolate and glycerate, respectively. The sequence is that of Glyoxylate/hydroxypyruvate reductase B from Enterobacter sp. (strain 638).